A 72-amino-acid polypeptide reads, in one-letter code: Translation initiation factor IF-1 (72 aa).

The 72-residue stretch at 1–72 folds into the S1-like domain; sequence MAKEDSIEMQ…TKGRIVFRAR (72 aa).

Belongs to the IF-1 family. As to quaternary structure, component of the 30S ribosomal translation pre-initiation complex which assembles on the 30S ribosome in the order IF-2 and IF-3, IF-1 and N-formylmethionyl-tRNA(fMet); mRNA recruitment can occur at any time during PIC assembly.

Its subcellular location is the cytoplasm. In terms of biological role, one of the essential components for the initiation of protein synthesis. Stabilizes the binding of IF-2 and IF-3 on the 30S subunit to which N-formylmethionyl-tRNA(fMet) subsequently binds. Helps modulate mRNA selection, yielding the 30S pre-initiation complex (PIC). Upon addition of the 50S ribosomal subunit IF-1, IF-2 and IF-3 are released leaving the mature 70S translation initiation complex. The protein is Translation initiation factor IF-1 of Idiomarina loihiensis (strain ATCC BAA-735 / DSM 15497 / L2-TR).